The sequence spans 339 residues: Phospho-N-acetylmuramoyl-pentapeptide-transferase (339 aa).

10 helical membrane passes run 4–24, 53–73, 80–100, 113–133, 145–165, 176–196, 202–222, 228–248, 253–273, and 318–338; these read TTII…PFFI, MGGT…AFVL, AFGA…IGFL, GLTA…FYLV, LFGF…FWVV, GIDG…SVIA, FDVL…FVYN, VFMG…ISIT, WTLL…MLQV, and VDFF…AILY.

Belongs to the glycosyltransferase 4 family. MraY subfamily. It depends on Mg(2+) as a cofactor.

It localises to the cell membrane. The catalysed reaction is UDP-N-acetyl-alpha-D-muramoyl-L-alanyl-gamma-D-glutamyl-L-lysyl-D-alanyl-D-alanine + di-trans,octa-cis-undecaprenyl phosphate = Mur2Ac(oyl-L-Ala-gamma-D-Glu-L-Lys-D-Ala-D-Ala)-di-trans,octa-cis-undecaprenyl diphosphate + UMP. Its pathway is cell wall biogenesis; peptidoglycan biosynthesis. Catalyzes the initial step of the lipid cycle reactions in the biosynthesis of the cell wall peptidoglycan: transfers peptidoglycan precursor phospho-MurNAc-pentapeptide from UDP-MurNAc-pentapeptide onto the lipid carrier undecaprenyl phosphate, yielding undecaprenyl-pyrophosphoryl-MurNAc-pentapeptide, known as lipid I. This chain is Phospho-N-acetylmuramoyl-pentapeptide-transferase, found in Streptococcus mutans serotype c (strain ATCC 700610 / UA159).